A 292-amino-acid polypeptide reads, in one-letter code: Protease HtpX homolog (292 aa).

Transmembrane regions (helical) follow at residues T9–N29 and T31–S51. Zn(2+) is bound at residue H133. The active site involves E134. Residue H137 coordinates Zn(2+). The next 2 helical transmembrane spans lie at L148 to W168 and L185 to I205. Position 210 (E210) interacts with Zn(2+).

The protein belongs to the peptidase M48B family. Zn(2+) is required as a cofactor.

The protein localises to the cell membrane. This chain is Protease HtpX homolog, found in Thermococcus sibiricus (strain DSM 12597 / MM 739).